Consider the following 380-residue polypeptide: Queuine tRNA-ribosyltransferase (380 aa).

Aspartate 96 serves as the catalytic Proton acceptor. Substrate contacts are provided by residues 96-100, aspartate 150, glutamine 193, and glycine 220; that span reads DSGGF. Residues 251-257 are RNA binding; sequence GVGAPDS. Aspartate 270 acts as the Nucleophile in catalysis. Residues 275–279 are RNA binding; important for wobble base 34 recognition; that stretch reads TRIAR. The Zn(2+) site is built by cysteine 308, cysteine 310, cysteine 313, and histidine 339.

It belongs to the queuine tRNA-ribosyltransferase family. Homodimer. Within each dimer, one monomer is responsible for RNA recognition and catalysis, while the other monomer binds to the replacement base PreQ1. It depends on Zn(2+) as a cofactor.

The enzyme catalyses 7-aminomethyl-7-carbaguanine + guanosine(34) in tRNA = 7-aminomethyl-7-carbaguanosine(34) in tRNA + guanine. Its pathway is tRNA modification; tRNA-queuosine biosynthesis. Its function is as follows. Catalyzes the base-exchange of a guanine (G) residue with the queuine precursor 7-aminomethyl-7-deazaguanine (PreQ1) at position 34 (anticodon wobble position) in tRNAs with GU(N) anticodons (tRNA-Asp, -Asn, -His and -Tyr). Catalysis occurs through a double-displacement mechanism. The nucleophile active site attacks the C1' of nucleotide 34 to detach the guanine base from the RNA, forming a covalent enzyme-RNA intermediate. The proton acceptor active site deprotonates the incoming PreQ1, allowing a nucleophilic attack on the C1' of the ribose to form the product. After dissociation, two additional enzymatic reactions on the tRNA convert PreQ1 to queuine (Q), resulting in the hypermodified nucleoside queuosine (7-(((4,5-cis-dihydroxy-2-cyclopenten-1-yl)amino)methyl)-7-deazaguanosine). This is Queuine tRNA-ribosyltransferase from Streptococcus suis (strain 98HAH33).